Consider the following 213-residue polypeptide: ATP-dependent dethiobiotin synthetase BioD (213 aa).

Glycine 13–valine 18 serves as a coordination point for ATP. Threonine 17 is a Mg(2+) binding site. Residue lysine 33 is part of the active site. Position 100 (glutamate 100) interacts with Mg(2+). Residues glutamate 100–glycine 103 and proline 184–leucine 186 each bind ATP.

Belongs to the dethiobiotin synthetase family. Homodimer. It depends on Mg(2+) as a cofactor.

It is found in the cytoplasm. The enzyme catalyses (7R,8S)-7,8-diammoniononanoate + CO2 + ATP = (4R,5S)-dethiobiotin + ADP + phosphate + 3 H(+). It participates in cofactor biosynthesis; biotin biosynthesis; biotin from 7,8-diaminononanoate: step 1/2. Its function is as follows. Catalyzes a mechanistically unusual reaction, the ATP-dependent insertion of CO2 between the N7 and N8 nitrogen atoms of 7,8-diaminopelargonic acid (DAPA, also called 7,8-diammoniononanoate) to form a ureido ring. The chain is ATP-dependent dethiobiotin synthetase BioD from Rhodopseudomonas palustris (strain HaA2).